The following is a 289-amino-acid chain: Urease accessory protein UreD (289 aa).

Belongs to the UreD family. As to quaternary structure, ureD, UreF and UreG form a complex that acts as a GTP-hydrolysis-dependent molecular chaperone, activating the urease apoprotein by helping to assemble the nickel containing metallocenter of UreC. The UreE protein probably delivers the nickel.

The protein localises to the cytoplasm. In terms of biological role, required for maturation of urease via the functional incorporation of the urease nickel metallocenter. The protein is Urease accessory protein UreD of Cupriavidus necator (strain ATCC 17699 / DSM 428 / KCTC 22496 / NCIMB 10442 / H16 / Stanier 337) (Ralstonia eutropha).